We begin with the raw amino-acid sequence, 728 residues long: MSTLPRFDSVDLGNAPVPADAARRFEELAAKAGTGEAWETAEQIPVGTLFNEDVYKDMDWLDTYAGIPPFVHGPYATMYAFRPWTIRQYAGFSTAKESNAFYRRNLAAGQKGLSVAFDLPTHRGYDSDNPRVAGDVGMAGVAIDSIYDMRELFAGIPLDQMSVSMTMNGAVLPILALYVVTAEEQGVKPEQLAGTIQNDILKEFMVRNTYIYPPQPSMRIISEIFAYTSANMPKWNSISISGYHMQEAGATADIEMAYTLADGVDYIRAGESVGLNVDQFAPRLSFFWGIGMNFFMEVAKLRAARMLWAKLVHQFGPKNPKSMSLRTHSQTSGWSLTAQDVYNNVVRTCIEAMAATQGHTQSLHTNSLDEAIALPTDFSARIARNTQLFLQQESGTTRVIDPWSGSAYVEELTWDLARKAWGHIQEVEKVGGMAKAIEKGIPKMRIEEAAARTQARIDSGRQPLIGVNKYRLEHEPPLDVLKVDNSTVLAEQKAKLVKLRAERDPEKVKAALDKITWAAGNPDDKDPDRNLLKLCIDAGRAMATVGEMSDALEKVFGRYTAQIRTISGVYSKEVKNTPEVEEARELVEEFEQAEGRRPRILLAKMGQDGHDRGQKVIATAYADLGFDVDVGPLFQTPEETARQAVEADVHVVGVSSLAGGHLTLVPALRKELDKLGRPDILITVGGVIPEQDFDELRKDGAVEIYTPGTVIPESAISLVKKLRASLDA.

(R)-methylmalonyl-CoA contacts are provided by Tyr75, Met78, Arg82, Thr85, Arg87, Tyr89, and Ser114. The cob(II)alamin site is built by Phe117 and Ala139. The (R)-methylmalonyl-CoA site is built by Thr195 and Gln197. The cob(II)alamin site is built by Val206 and Arg207. The (R)-methylmalonyl-CoA site is built by Arg207, His244, Arg283, and Ser285. Cob(II)alamin-binding residues include Gly333, Glu370, Ala373, Gly609, His610, Asp611, Arg612, Ser655, Leu657, Gly686, and Thr709. A B12-binding domain is found at 597 to 728; sequence RPRILLAKMG…VKKLRASLDA (132 aa).

Belongs to the methylmalonyl-CoA mutase family. In terms of assembly, heterodimer of an alpha and a beta chain. It depends on adenosylcob(III)alamin as a cofactor.

It carries out the reaction (R)-methylmalonyl-CoA = succinyl-CoA. In terms of biological role, catalyzes the reversible conversion of succinyl-CoA to (R)-methylmalonyl-CoA through a radical mechanism. Is involved in the fermentation of pyruvate to propanoate that occurs in Propionibacteria. In Propionibacterium freudenreichii subsp. shermanii, this protein is Methylmalonyl-CoA mutase large subunit (mutB).